We begin with the raw amino-acid sequence, 463 residues long: Methionine aminopeptidase 2-2 (463 aa).

The segment at 1–97 is disordered; the sequence is MGSKSPEGHW…TLSVTELKQT (97 aa). Positions 27-36 are enriched in polar residues; it reads DPQTSQNGSG. Over residues 46-57 the composition is skewed to acidic residues; sequence GDDDDDDEDAEE. Residues 69 to 85 are compositionally biased toward basic residues; it reads KKKKRKKSNKKKKKKTK. A compositionally biased stretch (polar residues) spans 86 to 97; sequence SGTLSVTELKQT. Histidine 215 contacts substrate. The a divalent metal cation site is built by aspartate 236, aspartate 247, and histidine 316. Residue histidine 324 participates in substrate binding. Residues glutamate 349 and glutamate 444 each coordinate a divalent metal cation.

This sequence belongs to the peptidase M24A family. Methionine aminopeptidase eukaryotic type 2 subfamily. The cofactor is Co(2+). Zn(2+) serves as cofactor. Mn(2+) is required as a cofactor. Requires Fe(2+) as cofactor.

The protein localises to the cytoplasm. The catalysed reaction is Release of N-terminal amino acids, preferentially methionine, from peptides and arylamides.. Its function is as follows. Cotranslationally removes the N-terminal methionine from nascent proteins. The N-terminal methionine is often cleaved when the second residue in the primary sequence is small and uncharged (Met-Ala-, Cys, Gly, Pro, Ser, Thr, or Val). The polypeptide is Methionine aminopeptidase 2-2 (Neosartorya fischeri (strain ATCC 1020 / DSM 3700 / CBS 544.65 / FGSC A1164 / JCM 1740 / NRRL 181 / WB 181) (Aspergillus fischerianus)).